A 593-amino-acid polypeptide reads, in one-letter code: Calnexin (593 aa).

Positions 1–20 are cleaved as a signal peptide; that stretch reads MEGKWLLCMLLVLGTTIVQA. The Lumenal portion of the chain corresponds to 21 to 482; sequence HEGHDDDMID…QMIEAAEERP (462 aa). Positions 75 and 118 each coordinate Ca(2+). N6-acetyllysine is present on K138. A disulfide bridge connects residues C161 and C195. An alpha-D-glucoside-binding residues include Y165, K167, Y186, and D193. A disordered region spans residues 261–346; the sequence is GNLLNDMTPP…AEKPEDWDED (86 aa). A p domain (Extended arm) region spans residues 277–410; sequence IEDPEDQKPE…RKIPNPDFFE (134 aa). 5 tandem repeats follow at residues 279 to 290, 296 to 307, 315 to 326, 334 to 345, and 349 to 359. 4 X approximate repeats stretches follow at residues 279 to 345 and 349 to 406; these read DPED…DWDE and GEWE…IPNP. Residues 282 to 320 are compositionally biased toward basic and acidic residues; the sequence is DQKPEDWDERPKIPDPDAVKPDDWNEDAPAKIPDEEATK. A compositionally biased stretch (acidic residues) spans 324-346; sequence WLDDEPEYVPDPDAEKPEDWDED. The segment at 327–360 is interaction with PPIB; sequence DEPEYVPDPDAEKPEDWDEDMDGEWEAPQIANPK. An intrachain disulfide couples C361 to C367. 3 tandem repeats follow at residues 368 to 378, 382 to 392, and 396 to 406. An alpha-D-glucoside is bound at residue E426. Residue D437 coordinates Ca(2+). Residues 483-503 form a helical membrane-spanning segment; it reads WLWVVYVLTVALPVFLVILFC. 2 S-palmitoyl cysteine lipidation sites follow: C503 and C504. At 504–593 the chain is on the cytoplasmic side; sequence CSGKKQSSPV…SPRNRKPRRE (90 aa). Positions 504-593 are sufficient to mediate interaction with SGIP1; sequence CSGKKQSSPV…SPRNRKPRRE (90 aa). The segment at 511-593 is disordered; that stretch reads SPVEYKKTDA…SPRNRKPRRE (83 aa). A compositionally biased stretch (acidic residues) spans 526–548; it reads KEEEEEKEEEKDKGDEEEEGEEK. S555 carries the phosphoserine modification. Position 563 is a phosphothreonine (T563). A Phosphoserine; by MAPK3 modification is found at S565. Position 584 is a phosphoserine (S584).

Belongs to the calreticulin family. In terms of assembly, interacts with MAPK3/ERK1. Interacts with KCNH2. Associates with ribosomes. Interacts with SGIP1; involved in negative regulation of endocytosis. The palmitoylated form interacts with the ribosome-translocon complex component SSR1, promoting efficient folding of glycoproteins. Interacts with SERPINA2P/SERPINA2 and with the S and Z variants of SERPINA1. Interacts with PPIB. Interacts with ZNRF4. Interacts with SMIM22. Interacts with TMX2. Interacts with TMEM35A/NACHO and CHRNA7. Interacts with reticulophagy regulators RETREG2 and RETREG3. Interacts with DNM1L; may form part of a larger protein complex at the ER-mitochondrial interface during mitochondrial fission. Interacts with ADAM7. Post-translationally, phosphorylated at Ser-565 by MAPK3/ERK1. Phosphorylation by MAPK3/ERK1 increases its association with ribosomes. Palmitoylation by DHHC6 leads to the preferential localization to the perinuclear rough ER. It mediates the association of calnexin with the ribosome-translocon complex (RTC) which is required for efficient folding of glycosylated proteins. In terms of processing, ubiquitinated, leading to proteasomal degradation. Probably ubiquitinated by ZNRF4.

It localises to the endoplasmic reticulum membrane. It is found in the mitochondrion membrane. Its subcellular location is the melanosome membrane. Functionally, calcium-binding protein that interacts with newly synthesized monoglucosylated glycoproteins in the endoplasmic reticulum. It may act in assisting protein assembly and/or in the retention within the ER of unassembled protein subunits. It seems to play a major role in the quality control apparatus of the ER by the retention of incorrectly folded proteins. Associated with partial T-cell antigen receptor complexes that escape the ER of immature thymocytes, it may function as a signaling complex regulating thymocyte maturation. Additionally it may play a role in receptor-mediated endocytosis at the synapse. The polypeptide is Calnexin (CANX) (Canis lupus familiaris (Dog)).